Reading from the N-terminus, the 511-residue chain is Glucans biosynthesis protein G (511 aa).

An N-terminal signal peptide occupies residues 1–22 (MMKMRWLSAAVMLTLYTSSSWA).

The protein belongs to the OpgD/OpgG family.

It is found in the periplasm. It participates in glycan metabolism; osmoregulated periplasmic glucan (OPG) biosynthesis. Its function is as follows. Involved in the biosynthesis of osmoregulated periplasmic glucans (OPGs). The chain is Glucans biosynthesis protein G from Escherichia coli (strain K12 / MC4100 / BW2952).